A 164-amino-acid polypeptide reads, in one-letter code: Low molecular weight phosphotyrosine protein phosphatase 2 (164 aa).

The active-site Nucleophile is C14. The active site involves R20. Catalysis depends on D130, which acts as the Proton donor.

This sequence belongs to the low molecular weight phosphotyrosine protein phosphatase family. In terms of tissue distribution, cone cells and primary pigment cells in developing pupal retina.

The protein localises to the cytoplasm. It carries out the reaction O-phospho-L-tyrosyl-[protein] + H2O = L-tyrosyl-[protein] + phosphate. The enzyme catalyses a phosphate monoester + H2O = an alcohol + phosphate. Its function is as follows. Catalyzes the dephosphorylation of tyrosine phosphorylated proteins and low-MW aryl phosphates. Can contribute to the regulation of a variety of developmental processes. The protein is Low molecular weight phosphotyrosine protein phosphatase 2 (primo-2) of Drosophila melanogaster (Fruit fly).